We begin with the raw amino-acid sequence, 347 residues long: Phosphoribosylformylglycinamidine cyclo-ligase (347 aa).

The protein belongs to the AIR synthase family.

It is found in the cytoplasm. The enzyme catalyses 2-formamido-N(1)-(5-O-phospho-beta-D-ribosyl)acetamidine + ATP = 5-amino-1-(5-phospho-beta-D-ribosyl)imidazole + ADP + phosphate + H(+). It participates in purine metabolism; IMP biosynthesis via de novo pathway; 5-amino-1-(5-phospho-D-ribosyl)imidazole from N(2)-formyl-N(1)-(5-phospho-D-ribosyl)glycinamide: step 2/2. The polypeptide is Phosphoribosylformylglycinamidine cyclo-ligase (Hydrogenovibrio crunogenus (strain DSM 25203 / XCL-2) (Thiomicrospira crunogena)).